Consider the following 180-residue polypeptide: UPF0690 protein C1orf52 homolog (180 aa).

2 disordered regions span residues methionine 1–arginine 66 and lysine 96–lysine 180. Over residues lysine 48–phenylalanine 61 the composition is skewed to basic and acidic residues. Threonine 65 is subject to Phosphothreonine. Tyrosine 130 carries the post-translational modification Phosphotyrosine. Over residues glutamate 149–lysine 160 the composition is skewed to acidic residues. The residue at position 156 (serine 156) is a Phosphoserine. Over residues aspartate 161–lysine 180 the composition is skewed to basic and acidic residues.

The protein belongs to the UPF0690 family.

The protein is UPF0690 protein C1orf52 homolog of Mus musculus (Mouse).